A 309-amino-acid polypeptide reads, in one-letter code: Large ribosomal subunit protein uL22m (309 aa).

The N-terminal 25 residues, M1 to R25, are a transit peptide targeting the mitochondrion. A disordered region spans residues S40 to S63. Over residues N48–E59 the composition is skewed to basic and acidic residues.

This sequence belongs to the universal ribosomal protein uL22 family. As to quaternary structure, component of the mitochondrial large ribosomal subunit (mt-LSU). Mature yeast 74S mitochondrial ribosomes consist of a small (37S) and a large (54S) subunit. The 37S small subunit contains a 15S ribosomal RNA (15S mt-rRNA) and 34 different proteins. The 54S large subunit contains a 21S rRNA (21S mt-rRNA) and 46 different proteins. uL22m forms the wall of the exit tunnel.

Its subcellular location is the mitochondrion. In terms of biological role, component of the mitochondrial ribosome (mitoribosome), a dedicated translation machinery responsible for the synthesis of mitochondrial genome-encoded proteins, including at least some of the essential transmembrane subunits of the mitochondrial respiratory chain. The mitoribosomes are attached to the mitochondrial inner membrane and translation products are cotranslationally integrated into the membrane. In Saccharomyces cerevisiae (strain ATCC 204508 / S288c) (Baker's yeast), this protein is Large ribosomal subunit protein uL22m (MRPL22).